Here is a 351-residue protein sequence, read N- to C-terminus: 3-ketosteroid-9-alpha-monooxygenase, ferredoxin reductase component (351 aa).

The FAD-binding FR-type domain maps to S10 to K116. The region spanning A264–F351 is the 2Fe-2S ferredoxin-type domain. [2Fe-2S] cluster is bound by residues C300, C305, C308, and C338.

The two-component system 3-ketosteroid-9-alpha-monooxygenase is composed of an oxygenase component KshA and a reductase component KshB. The cofactor is FAD. It depends on [2Fe-2S] cluster as a cofactor.

The enzyme catalyses androsta-1,4-diene-3,17-dione + 2 reduced [2Fe-2S]-[ferredoxin] + O2 + 2 H(+) = 9alpha-hydroxyandrosta-1,4-diene-3,17-dione + 2 oxidized [2Fe-2S]-[ferredoxin] + H2O. Its pathway is steroid metabolism; cholesterol degradation. Its activity is regulated as follows. KSH activity is completely inhibited by zinc ions. KshB is specifically inhibited by Cu(2+) ions. Functionally, probably involved in the degradation of cholesterol. In vitro, catalyzes the introduction of a 9alpha-hydroxyl moiety into the ring B of 3-ketosteroid substrates such as 1,4-androstadiene-3,17-dione (ADD), 4-androstene-3,17-dione (AD), 4-androstene-17beta-ol-3-one (testosterone), 4-pregnene-3,20-dione (progesterone), 19-nor-4-androstene-3,17-dione (nordion), 1-(5alpha)-androstene-3,17-dione, 5alpha-androstane-3,17-dione and 5beta-androstane-3,17-dione. KSH has the highest activity with 3-keto-Delta4 steroid substrates. The chain is 3-ketosteroid-9-alpha-monooxygenase, ferredoxin reductase component from Rhodococcus rhodochrous.